The primary structure comprises 135 residues: Large ribosomal subunit protein mL41 (135 aa).

The transit peptide at 1 to 13 directs the protein to the mitochondrion; the sequence is MGFLTAVTQGLVR.

Belongs to the mitochondrion-specific ribosomal protein mL41 family. Component of the mitochondrial ribosome large subunit (39S) which comprises a 16S rRNA and about 50 distinct proteins. Interacts with BCL2.

It localises to the mitochondrion. Component of the mitochondrial ribosome large subunit. Also involved in apoptosis and cell cycle. Enhances p53/TP53 stability, thereby contributing to p53/TP53-induced apoptosis in response to growth-inhibitory condition. Enhances p53/TP53 translocation to the mitochondria. Has the ability to arrest the cell cycle at the G1 phase, possibly by stabilizing the CDKN1A and CDKN1B (p27Kip1) proteins. This Mus musculus (Mouse) protein is Large ribosomal subunit protein mL41 (Mrpl41).